A 256-amino-acid polypeptide reads, in one-letter code: NAD(P)H-hydrate epimerase (256 aa).

The segment covering 1–18 (MADPRRDPAAESKDRPST) has biased composition (basic and acidic residues). The disordered stretch occupies residues 1-21 (MADPRRDPAAESKDRPSTERV). Positions 23–229 (AYTADAVRAA…DLGLEPYLRR (207 aa)) constitute a YjeF N-terminal domain. 74–78 (DNGGD) is a (6S)-NADPHX binding site. K(+) is bound by residues N75 and D135. (6S)-NADPHX contacts are provided by residues 139 to 147 (GIGRLADRR) and D172. S175 is a binding site for K(+).

It belongs to the NnrE/AIBP family. Requires K(+) as cofactor.

The catalysed reaction is (6R)-NADHX = (6S)-NADHX. It carries out the reaction (6R)-NADPHX = (6S)-NADPHX. Catalyzes the epimerization of the S- and R-forms of NAD(P)HX, a damaged form of NAD(P)H that is a result of enzymatic or heat-dependent hydration. This is a prerequisite for the S-specific NAD(P)H-hydrate dehydratase to allow the repair of both epimers of NAD(P)HX. The polypeptide is NAD(P)H-hydrate epimerase (Microbacterium testaceum (strain StLB037)).